Reading from the N-terminus, the 251-residue chain is Hydroxyacylglutathione hydrolase (251 aa).

Zn(2+) is bound by residues H53, H55, D57, H58, H110, D127, and H165.

It belongs to the metallo-beta-lactamase superfamily. Glyoxalase II family. In terms of assembly, monomer. It depends on Zn(2+) as a cofactor.

It catalyses the reaction an S-(2-hydroxyacyl)glutathione + H2O = a 2-hydroxy carboxylate + glutathione + H(+). The protein operates within secondary metabolite metabolism; methylglyoxal degradation; (R)-lactate from methylglyoxal: step 2/2. Its function is as follows. Thiolesterase that catalyzes the hydrolysis of S-D-lactoyl-glutathione to form glutathione and D-lactic acid. This chain is Hydroxyacylglutathione hydrolase, found in Blochmanniella pennsylvanica (strain BPEN).